We begin with the raw amino-acid sequence, 720 residues long: Phosphatase and actin regulator 4 (720 aa).

Positions 1 to 48 (MGQPRFSRPVHPAAAAEEVDHPPSDAGMGVDVLESGDTTPPTKRKSKF) are disordered. The stretch at 74–99 (EVLERKISMRKPREELVKRGVLLEDP) is one RPEL 1 repeat. 3 disordered regions span residues 294–417 (SGTG…GLPR), 454–568 (NDGF…DTLA), and 610–648 (RPTA…LSQR). Over residues 346–368 (TYPPPSPSPPLPTHIPPEPPRMP) the composition is skewed to pro residues. Over residues 393 to 405 (KDFRSLEVSKRTA) the composition is skewed to basic and acidic residues. Composition is skewed to acidic residues over residues 481–494 (DDEE…EEEQ), 521–534 (EEQE…DSDS), and 542–551 (DDEEDEEEDE). RPEL repeat units follow at residues 601–626 (TTLI…QPKN) and 639–664 (RRLT…RFNE). Over residues 626 to 636 (NEADRQAEKRE) the composition is skewed to basic and acidic residues. Basic residues predominate over residues 637-646 (IKRRLTRKLS).

It belongs to the phosphatase and actin regulator family. In terms of assembly, binds PPP1CA and actin.

Its subcellular location is the cytoplasm. The protein resides in the cell projection. It is found in the lamellipodium. Functionally, regulator of protein phosphatase 1 (PP1) required for neural tube and optic fissure closure, and enteric neural crest cell (ENCCs) migration during development. Acts as an activator of PP1. During neural tube closure, localizes to the ventral neural tube and activates PP1, leading to down-regulate cell proliferation within cranial neural tissue and the neural retina. Also acts as a regulator of migration of enteric neural crest cells (ENCCs) by activating PP1, leading to repression of the integrin signaling through the RHO/ROCK pathway. The polypeptide is Phosphatase and actin regulator 4 (PHACTR4) (Gallus gallus (Chicken)).